Reading from the N-terminus, the 128-residue chain is Large ribosomal subunit protein bL21 (128 aa).

The interval 104–128 (GKSPSVGPRPKRVKAEPAPAADAAE) is disordered. Over residues 119 to 128 (EPAPAADAAE) the composition is skewed to low complexity.

The protein belongs to the bacterial ribosomal protein bL21 family. Part of the 50S ribosomal subunit. Contacts protein L20.

In terms of biological role, this protein binds to 23S rRNA in the presence of protein L20. The chain is Large ribosomal subunit protein bL21 from Rhodopseudomonas palustris (strain HaA2).